A 341-amino-acid chain; its full sequence is S-adenosylmethionine:tRNA ribosyltransferase-isomerase (341 aa).

This sequence belongs to the QueA family. Monomer.

The protein resides in the cytoplasm. It carries out the reaction 7-aminomethyl-7-carbaguanosine(34) in tRNA + S-adenosyl-L-methionine = epoxyqueuosine(34) in tRNA + adenine + L-methionine + 2 H(+). It participates in tRNA modification; tRNA-queuosine biosynthesis. In terms of biological role, transfers and isomerizes the ribose moiety from AdoMet to the 7-aminomethyl group of 7-deazaguanine (preQ1-tRNA) to give epoxyqueuosine (oQ-tRNA). This is S-adenosylmethionine:tRNA ribosyltransferase-isomerase from Pelotomaculum thermopropionicum (strain DSM 13744 / JCM 10971 / SI).